A 507-amino-acid chain; its full sequence is ESX-5 secretion system ATPase EccB5 (507 aa).

The chain crosses the membrane as a helical span at residues 56–76 (VVASVSAALVICLGSLLWSFI).

It belongs to the EccB family. In terms of assembly, part of the ESX-5 / type VII secretion system (T7SS), which is composed of cytosolic and membrane components. The ESX-5 membrane complex is composed of EccB5, EccC5, EccD5 and EccE5.

Its subcellular location is the cell inner membrane. In terms of biological role, an ATPase. Part of the ESX-5 specialized secretion system, which is responsible for the secretion of EsxN and a number of PE_PGRS and PPE proteins. The sequence is that of ESX-5 secretion system ATPase EccB5 from Mycobacterium marinum (strain ATCC BAA-535 / M).